Consider the following 252-residue polypeptide: MAARKPGLIALFDVDGTLTAPRKEVTPEMLKFMKELRKVVTVGVVGGSDLVKISEQLGKTVTTDYDYCFSENGLVAHKDGKLIGTQSLKSFLGDEKLKEFINFTLHYIADLDIPIKRGTFIEFRSGMLNVSPIGRDCSQEERDEFEKYDKVHKIRQTMVSVLREKFAHLNLTFSIGGQISFDVFPQGWDKTYCLRYLEEFNEIHFFGDKTYKGGNDHEIYESERTVGHTVTSPEDTVKQCSEQFLGKDNGSS.

Aspartate 13 serves as the catalytic Nucleophile. Residues aspartate 13 and aspartate 15 each coordinate Mg(2+). The active-site Proton donor/acceptor is aspartate 15. The alpha-D-mannose 1-phosphate site is built by arginine 22, arginine 124, arginine 135, arginine 142, serine 180, and aspartate 182. Residues aspartate 208, tyrosine 220, and threonine 225 each contribute to the Mg(2+) site.

This sequence belongs to the eukaryotic PMM family. Homodimer. The cofactor is Mg(2+). Expressed in roots, stems, leaves, flowers and immature fruits.

The protein localises to the cytoplasm. It carries out the reaction alpha-D-mannose 1-phosphate = D-mannose 6-phosphate. It participates in nucleotide-sugar biosynthesis; GDP-alpha-D-mannose biosynthesis; alpha-D-mannose 1-phosphate from D-fructose 6-phosphate: step 2/2. In terms of biological role, catalyzes the interconversion of mannose-6-phosphate to mannose-1-phosphate, the precursor for the synthesis of GDP-mannose. GDP-mannose is an essential sugar nucleotide for the synthesis of D-mannose-containing cell wall polysaccharides (galactomannans and glucomannans), glycolipids, glycoproteins and the antioxidant L-ascorbate. Can complement the yeast temperature-sensitive mutant sec53-6. This chain is Phosphomannomutase, found in Nicotiana benthamiana.